We begin with the raw amino-acid sequence, 192 residues long: Pyridoxal 5'-phosphate synthase subunit PdxT (192 aa).

46 to 48 (GES) contacts L-glutamine. Cys78 acts as the Nucleophile in catalysis. Residues Arg106 and 135 to 136 (IR) contribute to the L-glutamine site. Catalysis depends on charge relay system residues His171 and Glu173.

It belongs to the glutaminase PdxT/SNO family. In the presence of PdxS, forms a dodecamer of heterodimers. Only shows activity in the heterodimer.

It carries out the reaction aldehydo-D-ribose 5-phosphate + D-glyceraldehyde 3-phosphate + L-glutamine = pyridoxal 5'-phosphate + L-glutamate + phosphate + 3 H2O + H(+). It catalyses the reaction L-glutamine + H2O = L-glutamate + NH4(+). Its pathway is cofactor biosynthesis; pyridoxal 5'-phosphate biosynthesis. Functionally, catalyzes the hydrolysis of glutamine to glutamate and ammonia as part of the biosynthesis of pyridoxal 5'-phosphate. The resulting ammonia molecule is channeled to the active site of PdxS. The polypeptide is Pyridoxal 5'-phosphate synthase subunit PdxT (Kosmotoga olearia (strain ATCC BAA-1733 / DSM 21960 / TBF 19.5.1)).